A 136-amino-acid polypeptide reads, in one-letter code: Cytochrome c-550 (136 aa).

Residues 1–28 (MTKLTFGALVALAMTAAASTAMSSKAMA) form the signal peptide. Heme c contacts are provided by C41, C44, H45, and M107.

Binds 1 heme c group covalently per subunit. Post-translationally, the N-terminus is blocked.

Its subcellular location is the periplasm. Its function is as follows. Plays a role in bacteroid respiration under conditions of oxygen limitation. Required for electron-transfer during denitrification. The sequence is that of Cytochrome c-550 (cycA) from Bradyrhizobium diazoefficiens (strain JCM 10833 / BCRC 13528 / IAM 13628 / NBRC 14792 / USDA 110).